The primary structure comprises 155 residues: Transcription antitermination protein NusB (155 aa).

This sequence belongs to the NusB family.

In terms of biological role, involved in transcription antitermination. Required for transcription of ribosomal RNA (rRNA) genes. Binds specifically to the boxA antiterminator sequence of the ribosomal RNA (rrn) operons. The protein is Transcription antitermination protein NusB of Vibrio campbellii (strain ATCC BAA-1116).